The sequence spans 283 residues: Phosphate import ATP-binding protein PstB (283 aa).

Positions 1–20 (MAQTLAQTKQISQSHTFDVS) are enriched in polar residues. Residues 1–33 (MAQTLAQTKQISQSHTFDVSQSHHKTPNDTNSH) form a disordered region. One can recognise an ABC transporter domain in the interval 37–278 (YSTQNLDLWY…PSNKKTEDYI (242 aa)). 69–76 (GPSGCGKS) provides a ligand contact to ATP.

This sequence belongs to the ABC transporter superfamily. Phosphate importer (TC 3.A.1.7) family. The complex is composed of two ATP-binding proteins (PstB), two transmembrane proteins (PstC and PstA) and a solute-binding protein (PstS).

The protein resides in the cell membrane. It catalyses the reaction phosphate(out) + ATP + H2O = ADP + 2 phosphate(in) + H(+). Functionally, part of the ABC transporter complex PstSACB involved in phosphate import. Responsible for energy coupling to the transport system. The chain is Phosphate import ATP-binding protein PstB from Staphylococcus aureus (strain bovine RF122 / ET3-1).